The primary structure comprises 218 residues: Octanoyltransferase (218 aa).

Residues 32–218 (GEAAEAIWLL…LRTFPQHFPD (187 aa)) enclose the BPL/LPL catalytic domain. Substrate-binding positions include 71 to 78 (RGGQYTYH), 151 to 153 (AIG), and 164 to 166 (GLS). Cys-182 serves as the catalytic Acyl-thioester intermediate.

The protein belongs to the LipB family.

Its subcellular location is the cytoplasm. It catalyses the reaction octanoyl-[ACP] + L-lysyl-[protein] = N(6)-octanoyl-L-lysyl-[protein] + holo-[ACP] + H(+). It participates in protein modification; protein lipoylation via endogenous pathway; protein N(6)-(lipoyl)lysine from octanoyl-[acyl-carrier-protein]: step 1/2. Functionally, catalyzes the transfer of endogenously produced octanoic acid from octanoyl-acyl-carrier-protein onto the lipoyl domains of lipoate-dependent enzymes. Lipoyl-ACP can also act as a substrate although octanoyl-ACP is likely to be the physiological substrate. In Cereibacter sphaeroides (strain ATCC 17023 / DSM 158 / JCM 6121 / CCUG 31486 / LMG 2827 / NBRC 12203 / NCIMB 8253 / ATH 2.4.1.) (Rhodobacter sphaeroides), this protein is Octanoyltransferase.